The following is a 233-amino-acid chain: CDP-diacylglycerol--glycerol-3-phosphate 3-phosphatidyltransferase 2 (233 aa).

The disordered stretch occupies residues 1-23 (MGEEDTATVDQNSFGGGKDSLLR). 5 consecutive transmembrane segments (helical) span residues 40–60 (VITL…ILVA), 71–91 (TATT…GYIA), 100–120 (FGAF…LILL), 125–145 (MVAV…IAII), and 201–221 (LPSG…SLVV).

It belongs to the CDP-alcohol phosphatidyltransferase class-I family. Mn(2+) serves as cofactor.

It localises to the microsome membrane. Its subcellular location is the endoplasmic reticulum membrane. It catalyses the reaction a CDP-1,2-diacyl-sn-glycerol + sn-glycerol 3-phosphate = a 1,2-diacyl-sn-glycero-3-phospho-(1'-sn-glycero-3'-phosphate) + CMP + H(+). It functions in the pathway phospholipid metabolism; phosphatidylglycerol biosynthesis; phosphatidylglycerol from CDP-diacylglycerol: step 1/2. In terms of biological role, catalyzes the committed step to the synthesis of the acidic phospholipids, including phosphatidylglycerol (PG). Together with PGPS1, required for the proper embryo development by providing PG accurate levels. In Arabidopsis thaliana (Mouse-ear cress), this protein is CDP-diacylglycerol--glycerol-3-phosphate 3-phosphatidyltransferase 2.